Here is a 637-residue protein sequence, read N- to C-terminus: 1-deoxy-D-xylulose-5-phosphate synthase (637 aa).

Residues His-76 and 117-119 contribute to the thiamine diphosphate site; that span reads GHS. Mg(2+) is bound at residue Asp-148. Thiamine diphosphate is bound by residues 149–150, Asn-177, Tyr-294, and Glu-381; that span reads GA. Position 177 (Asn-177) interacts with Mg(2+).

This sequence belongs to the transketolase family. DXPS subfamily. As to quaternary structure, homodimer. Mg(2+) is required as a cofactor. Thiamine diphosphate serves as cofactor.

It carries out the reaction D-glyceraldehyde 3-phosphate + pyruvate + H(+) = 1-deoxy-D-xylulose 5-phosphate + CO2. It functions in the pathway metabolic intermediate biosynthesis; 1-deoxy-D-xylulose 5-phosphate biosynthesis; 1-deoxy-D-xylulose 5-phosphate from D-glyceraldehyde 3-phosphate and pyruvate: step 1/1. In terms of biological role, catalyzes the acyloin condensation reaction between C atoms 2 and 3 of pyruvate and glyceraldehyde 3-phosphate to yield 1-deoxy-D-xylulose-5-phosphate (DXP). The chain is 1-deoxy-D-xylulose-5-phosphate synthase from Neisseria meningitidis serogroup B (strain ATCC BAA-335 / MC58).